The sequence spans 223 residues: RNA polymerase sigma-H factor (223 aa).

Positions 67 to 80 (DIVQEGMIGLYKSI) match the Polymerase core binding motif. Positions 187–206 (YQEISEELNRHVKSIDNALQ) form a DNA-binding region, H-T-H motif.

This sequence belongs to the sigma-70 factor family.

In terms of biological role, sigma factors are initiation factors that promote the attachment of RNA polymerase to specific initiation sites and are then released. This sigma factor is involved in the transition to post-exponential phase in the beginning of sporulation. The protein is RNA polymerase sigma-H factor (sigH) of Bacillus licheniformis.